The chain runs to 343 residues: MKILGIETSCDDTSVAIYDKKLGLIDHQTLNQNSVHSKYHGIVPELAARSHLNQLNFLIKNIFSKYFLYNSSNFKKKFFKAVAYTVGPGLSGSIVVHSCRSIALSLDIPYILINHLEGHLLSVMLSYKKNLFPFLALLVSGANTQLIYAKYLGKYIILGQTLDDAVGNVFDYIAKILGLGFPGGKNLSDLAKYGISGKYFFPRPMTKYSNLNFSFSGLKTHVKNVILNSSDSFQEKSNIAKSFEEAIVDTLIIKCKLAIKKIKVKNFLVCGGVSSNRLLRIKLKKLIYKNQRKLYFSKKKFCTDNAGMIAYLGFLKYQQGMYSYNKSFSIYPNLLISDNINYL.

Fe cation contacts are provided by His-115 and His-119. Substrate contacts are provided by residues 138-142, Asp-171, Gly-184, and Asn-276; that span reads LVSGA. Residue Asp-304 coordinates Fe cation.

This sequence belongs to the KAE1 / TsaD family. The cofactor is Fe(2+).

Its subcellular location is the cytoplasm. It carries out the reaction L-threonylcarbamoyladenylate + adenosine(37) in tRNA = N(6)-L-threonylcarbamoyladenosine(37) in tRNA + AMP + H(+). Required for the formation of a threonylcarbamoyl group on adenosine at position 37 (t(6)A37) in tRNAs that read codons beginning with adenine. Is involved in the transfer of the threonylcarbamoyl moiety of threonylcarbamoyl-AMP (TC-AMP) to the N6 group of A37, together with TsaE and TsaB. TsaD likely plays a direct catalytic role in this reaction. This chain is tRNA N6-adenosine threonylcarbamoyltransferase, found in Buchnera aphidicola subsp. Cinara cedri (strain Cc).